A 256-amino-acid polypeptide reads, in one-letter code: Trypsin, alkaline A (256 aa).

The signal sequence occupies residues 1 to 17 (MRLFLALLALGFAAVAA). Residues 18-24 (VPAYPQR) constitute a propeptide, activation peptide. Residues 25-256 (IVGGSTTTIQ…RFANWIRNNS (232 aa)) enclose the Peptidase S1 domain. A disulfide bond links cysteine 55 and cysteine 71. Residues histidine 70 and aspartate 115 each act as charge relay system in the active site. 2 cysteine pairs are disulfide-bonded: cysteine 180/cysteine 197 and cysteine 209/cysteine 233. The active-site Charge relay system is serine 213.

The protein belongs to the peptidase S1 family. In terms of tissue distribution, midgut.

The protein resides in the secreted. The protein localises to the extracellular space. The enzyme catalyses Preferential cleavage: Arg-|-Xaa, Lys-|-Xaa.. The sequence is that of Trypsin, alkaline A from Manduca sexta (Tobacco hawkmoth).